The chain runs to 311 residues: Pyrimidine-specific ribonucleoside hydrolase RihA (311 aa).

Histidine 240 is a catalytic residue.

This sequence belongs to the IUNH family. RihA subfamily.

Functionally, hydrolyzes cytidine or uridine to ribose and cytosine or uracil, respectively. The protein is Pyrimidine-specific ribonucleoside hydrolase RihA of Salmonella paratyphi B (strain ATCC BAA-1250 / SPB7).